We begin with the raw amino-acid sequence, 404 residues long: Probable RNA polymerase sigma-C factor (404 aa).

A Polymerase core binding motif is present at residues Asp-193–Val-206. The segment at residues Leu-362–Ala-381 is a DNA-binding region (H-T-H motif).

The protein belongs to the sigma-70 factor family.

Sigma factors are initiation factors that promote the attachment of RNA polymerase to specific initiation sites and are then released. The protein is Probable RNA polymerase sigma-C factor (sigC) of Synechocystis sp. (strain ATCC 27184 / PCC 6803 / Kazusa).